Consider the following 137-residue polypeptide: Large ribosomal subunit protein uL16 (137 aa).

The protein belongs to the universal ribosomal protein uL16 family. Part of the 50S ribosomal subunit.

Its function is as follows. Binds 23S rRNA and is also seen to make contacts with the A and possibly P site tRNAs. The sequence is that of Large ribosomal subunit protein uL16 from Streptococcus equi subsp. zooepidemicus (strain H70).